Here is a 35-residue protein sequence, read N- to C-terminus: Unknown protein 14 from 2D-PAGE (35 aa).

The interval 1-35 is disordered; sequence VVXXQTLXDXRGIYGDQGSIGPXXIXGLQGDRDAD.

This is Unknown protein 14 from 2D-PAGE from Bombyx mori (Silk moth).